The primary structure comprises 244 residues: tRNA (guanine-N(1)-)-methyltransferase (244 aa).

S-adenosyl-L-methionine contacts are provided by residues glycine 114 and isoleucine 134 to leucine 139. The interval arginine 220 to alanine 244 is disordered.

This sequence belongs to the RNA methyltransferase TrmD family. As to quaternary structure, homodimer.

The protein localises to the cytoplasm. It catalyses the reaction guanosine(37) in tRNA + S-adenosyl-L-methionine = N(1)-methylguanosine(37) in tRNA + S-adenosyl-L-homocysteine + H(+). In terms of biological role, specifically methylates guanosine-37 in various tRNAs. This is tRNA (guanine-N(1)-)-methyltransferase from Rhizobium johnstonii (strain DSM 114642 / LMG 32736 / 3841) (Rhizobium leguminosarum bv. viciae).